Reading from the N-terminus, the 321-residue chain is L-carnitine dehydrogenase (321 aa).

Gly14–Gly19 contacts NAD(+).

This sequence belongs to the 3-hydroxyacyl-CoA dehydrogenase family. L-carnitine dehydrogenase subfamily. Homodimer.

Its subcellular location is the cytoplasm. It catalyses the reaction carnitine + NAD(+) = 3-dehydrocarnitine + NADH + H(+). It functions in the pathway amine and polyamine metabolism; carnitine metabolism. With respect to regulation, analogs of L-carnitine such as D-carnitine, glycine betaine and choline, are competitive inhibitors of L-carnitine oxidation. In terms of biological role, catalyzes the NAD(+)-dependent oxidation of L-carnitine to 3-dehydrocarnitine. Is specific for L-carnitine and NAD(+) as substrates. D,L-3-hydroxybutyrate, L-lactate, ethanol, L-malate and D,L-isocitrate are not substrates. Is involved in a L-carnitine degradation pathway that allows P.aeruginosa to grow on L-carnitine as the sole source of carbon and nitrogen. In Pseudomonas aeruginosa (strain ATCC 15692 / DSM 22644 / CIP 104116 / JCM 14847 / LMG 12228 / 1C / PRS 101 / PAO1), this protein is L-carnitine dehydrogenase.